The primary structure comprises 1279 residues: ATP-dependent helicase/nuclease subunit A (1279 aa).

Residues 4–499 enclose the UvrD-like helicase ATP-binding domain; sequence TKWTDEQRQA…VKLFKNFRSR (496 aa). 25–32 is a binding site for ATP; the sequence is AGAGAGKT. A UvrD-like helicase C-terminal domain is found at 526 to 853; it reads EEALKVGASY…RIMSIHKSKG (328 aa).

The protein belongs to the helicase family. AddA subfamily. In terms of assembly, heterodimer of AddA and AddB/RexB. The cofactor is Mg(2+).

It carries out the reaction Couples ATP hydrolysis with the unwinding of duplex DNA by translocating in the 3'-5' direction.. The catalysed reaction is ATP + H2O = ADP + phosphate + H(+). The heterodimer acts as both an ATP-dependent DNA helicase and an ATP-dependent, dual-direction single-stranded exonuclease. Recognizes the chi site generating a DNA molecule suitable for the initiation of homologous recombination. The AddA nuclease domain is required for chi fragment generation; this subunit has the helicase and 3' -&gt; 5' nuclease activities. The chain is ATP-dependent helicase/nuclease subunit A from Clostridium botulinum (strain Loch Maree / Type A3).